Reading from the N-terminus, the 103-residue chain is Large ribosomal subunit protein bL21 (103 aa).

The protein belongs to the bacterial ribosomal protein bL21 family. As to quaternary structure, part of the 50S ribosomal subunit. Contacts protein L20.

In terms of biological role, this protein binds to 23S rRNA in the presence of protein L20. The chain is Large ribosomal subunit protein bL21 from Paraburkholderia phytofirmans (strain DSM 17436 / LMG 22146 / PsJN) (Burkholderia phytofirmans).